The following is a 631-amino-acid chain: RING finger protein 112 (631 aa).

An RING-type zinc finger spans residues 57-98; it reads CSICLERLREPISLDCGHDFCIRCFSTHRIPGCELPCCPECR. Residues 131–631 form an interaction with ZBTB16 region; sequence AVRAERLLLV…GDREPLLQEE (501 aa). The GB1/RHD3-type G domain maps to 166–397; the sequence is DTPVCLLAVL…YISDVLSTAP (232 aa). 317 to 318 lines the GTP pocket; sequence RD. The next 2 helical transmembrane spans lie at 547-567 and 580-600; these read LAAV…GVVG and GMVA…GGGV.

The protein belongs to the TRAFAC class dynamin-like GTPase superfamily. GB1/RHD3 GTPase family. GB1 subfamily. In terms of assembly, self-associates. Interacts with SP1 in an oxidative stress-regulated manner. Interacts with SIGMAR1 in an oxidative stress-regulated manner. Interacts with ZBTB16 (via C2H2-type zinc finger domains 1 and 2). In terms of processing, auto-ubiquitinated. In terms of tissue distribution, predominantly expressed in brain.

It is found in the membrane. Its subcellular location is the cytoplasm. The protein localises to the nucleus. The protein resides in the nuclear body. It localises to the nucleoplasm. It is found in the endosome. Its subcellular location is the cytoplasmic vesicle. The protein localises to the secretory vesicle. The protein resides in the synaptic vesicle. It localises to the postsynaptic density. It is found in the perikaryon. Its subcellular location is the cell projection. The protein localises to the neuron projection. It catalyses the reaction S-ubiquitinyl-[E2 ubiquitin-conjugating enzyme]-L-cysteine + [acceptor protein]-L-lysine = [E2 ubiquitin-conjugating enzyme]-L-cysteine + N(6)-ubiquitinyl-[acceptor protein]-L-lysine.. Its pathway is protein modification; protein ubiquitination. E3 ubiquitin-protein ligase that plays an important role in neuronal differentiation, including neurogenesis and gliogenesis, during brain development. During embryonic development initiates neuronal differentiation by inducing cell cycle arrest at the G0/G1 phase through up-regulation of cell-cycle regulatory proteins. Plays a role not only in the fetal period during the development of the nervous system, but also in the adult brain, where it is involved in the maintenance of neural functions and protection of the nervous tissue cells from oxidative stress-induced damage. Exhibits GTPase and E3 ubiquitin-protein ligase activities. Regulates dendritic spine density and synaptic neurotransmission; its ability to hydrolyze GTP is involved in the maintenance of dendritic spine density. This Rattus norvegicus (Rat) protein is RING finger protein 112 (Rnf112).